A 262-amino-acid chain; its full sequence is Small ribosomal subunit protein mS23 (262 aa).

A compositionally biased stretch (acidic residues) spans 242–254; that stretch reads AAEEQETSLDDDA. The interval 242–262 is disordered; that stretch reads AAEEQETSLDDDATEKVAVAA.

This sequence belongs to the mitochondrion-specific ribosomal protein mS23 family. In terms of assembly, component of the mitochondrial small ribosomal subunit.

It localises to the mitochondrion. The sequence is that of Small ribosomal subunit protein mS23 (rsm25) from Aspergillus niger (strain ATCC MYA-4892 / CBS 513.88 / FGSC A1513).